A 431-amino-acid chain; its full sequence is Protein EARLY STARVATION 1, chloroplastic (431 aa).

The transit peptide at 1–19 (MAACSRGLVARPFDLTARG) directs the protein to the chloroplast. Disordered regions lie at residues 65 to 126 (GNKP…DTGI) and 403 to 431 (GVYP…SPLE). The span at 415 to 431 (PAPPSDDPPGMPPSPLE) shows a compositional bias: pro residues.

It belongs to the ESV1 family.

The protein localises to the plastid. Its subcellular location is the chloroplast stroma. Its function is as follows. Binds preferentially to highly ordered alpha-glucans, such as starch and crystalline maltodextrins. Involved in the organization of the starch granule matrix, thus influencing starch turnover by modulating the accessibility of starch polymers to modifying and degrading enzymes. Required for the control of starch degradation in leaves and starch distribution in nonphotosynthetic parts. Promotes gravitropic responses, negative in shoots but positive in roots, by facilitating starch granules (statoliths) formation in hypocotyls and roots columella. Facilitates tight packing of starch granules in grains. The protein is Protein EARLY STARVATION 1, chloroplastic of Oryza sativa subsp. indica (Rice).